A 255-amino-acid polypeptide reads, in one-letter code: 5-oxoprolinase subunit A (255 aa).

This sequence belongs to the LamB/PxpA family. As to quaternary structure, forms a complex composed of PxpA, PxpB and PxpC.

The enzyme catalyses 5-oxo-L-proline + ATP + 2 H2O = L-glutamate + ADP + phosphate + H(+). Functionally, catalyzes the cleavage of 5-oxoproline to form L-glutamate coupled to the hydrolysis of ATP to ADP and inorganic phosphate. The sequence is that of 5-oxoprolinase subunit A from Corynebacterium efficiens (strain DSM 44549 / YS-314 / AJ 12310 / JCM 11189 / NBRC 100395).